We begin with the raw amino-acid sequence, 371 residues long: Glutamate 5-kinase 2 (371 aa).

Residue Lys13 coordinates ATP. Substrate contacts are provided by Ser53, Asp140, and Asn152. ATP is bound by residues 172-173 (SD) and 214-220 (TGGMRSK). One can recognise a PUA domain in the interval 280-356 (EGEMILSDDC…KELTNRALID (77 aa)).

Belongs to the glutamate 5-kinase family.

The protein resides in the cytoplasm. The catalysed reaction is L-glutamate + ATP = L-glutamyl 5-phosphate + ADP. Its pathway is amino-acid biosynthesis; L-proline biosynthesis; L-glutamate 5-semialdehyde from L-glutamate: step 1/2. Functionally, catalyzes the transfer of a phosphate group to glutamate to form L-glutamate 5-phosphate. This Bacillus subtilis (strain 168) protein is Glutamate 5-kinase 2 (proJ).